The primary structure comprises 418 residues: 3-phosphoshikimate 1-carboxyvinyltransferase (418 aa).

Residues Lys-26, Ser-27, and Arg-31 each contribute to the 3-phosphoshikimate site. Phosphoenolpyruvate is bound at residue Lys-26. The phosphoenolpyruvate site is built by Gly-97 and Arg-125. Residues Ser-170, Ser-171, Gln-172, Asp-297, Asn-320, and Lys-324 each coordinate 3-phosphoshikimate. Position 172 (Gln-172) interacts with phosphoenolpyruvate. The active-site Proton acceptor is the Asp-297. Positions 328, 375, and 400 each coordinate phosphoenolpyruvate.

The protein belongs to the EPSP synthase family. In terms of assembly, monomer.

The protein localises to the cytoplasm. It catalyses the reaction 3-phosphoshikimate + phosphoenolpyruvate = 5-O-(1-carboxyvinyl)-3-phosphoshikimate + phosphate. It functions in the pathway metabolic intermediate biosynthesis; chorismate biosynthesis; chorismate from D-erythrose 4-phosphate and phosphoenolpyruvate: step 6/7. Catalyzes the transfer of the enolpyruvyl moiety of phosphoenolpyruvate (PEP) to the 5-hydroxyl of shikimate-3-phosphate (S3P) to produce enolpyruvyl shikimate-3-phosphate and inorganic phosphate. The polypeptide is 3-phosphoshikimate 1-carboxyvinyltransferase (Pseudomonas syringae pv. syringae (strain B728a)).